The sequence spans 163 residues: Ubiquitin-like protein 1-ribosomal protein eS31 fusion protein (163 aa).

Residues 1–70 form the Ubiquitin-like domain; sequence MVFVKTLNRT…IYVNLELLGG (70 aa). G70 participates in a covalent cross-link: Glycyl lysine isopeptide (Gly-Lys) (interchain with K-? in acceptor proteins). Residues 115–138 form a C4-type zinc finger; sequence CQQPSCGGGVFMAQHANRHYCGRC.

It in the N-terminal section; belongs to the ubiquitin family. In the C-terminal section; belongs to the eukaryotic ribosomal protein eS31 family.

The chain is Ubiquitin-like protein 1-ribosomal protein eS31 fusion protein (ubl-1) from Caenorhabditis briggsae.